The sequence spans 467 residues: UDP-glycosyltransferase 90A2 (467 aa).

UDP-alpha-D-glucose-binding positions include Ser289, 341 to 343 (VDQ), 358 to 366 (HCGWNSLTE), and 380 to 383 (AAEQ).

Belongs to the UDP-glycosyltransferase family.

This chain is UDP-glycosyltransferase 90A2 (UGT90A2), found in Arabidopsis thaliana (Mouse-ear cress).